The following is a 542-amino-acid chain: Glucose-6-phosphate isomerase (542 aa).

Residue glutamate 354 is the Proton donor of the active site. Residues histidine 385 and lysine 505 contribute to the active site.

The protein belongs to the GPI family.

The protein resides in the cytoplasm. The enzyme catalyses alpha-D-glucose 6-phosphate = beta-D-fructose 6-phosphate. The protein operates within carbohydrate biosynthesis; gluconeogenesis. It participates in carbohydrate degradation; glycolysis; D-glyceraldehyde 3-phosphate and glycerone phosphate from D-glucose: step 2/4. Functionally, catalyzes the reversible isomerization of glucose-6-phosphate to fructose-6-phosphate. The protein is Glucose-6-phosphate isomerase of Nitrosospira multiformis (strain ATCC 25196 / NCIMB 11849 / C 71).